The sequence spans 378 residues: 5-amino-6-(D-ribitylamino)uracil--L-tyrosine 4-hydroxyphenyl transferase (378 aa).

Residues 59 to 306 (VTYVINRNIN…TAVARIYLGN (248 aa)) form the Radical SAM core domain. Residues cysteine 73, cysteine 77, and cysteine 80 each coordinate [4Fe-4S] cluster.

This sequence belongs to the radical SAM superfamily. CofH family. As to quaternary structure, consists of two subunits, CofG and CofH. [4Fe-4S] cluster serves as cofactor.

It catalyses the reaction 5-amino-6-(D-ribitylamino)uracil + L-tyrosine + S-adenosyl-L-methionine = 5-amino-5-(4-hydroxybenzyl)-6-(D-ribitylimino)-5,6-dihydrouracil + 2-iminoacetate + 5'-deoxyadenosine + L-methionine + H(+). Its pathway is cofactor biosynthesis; coenzyme F0 biosynthesis. Catalyzes the radical-mediated synthesis of 5-amino-5-(4-hydroxybenzyl)-6-(D-ribitylimino)-5,6-dihydrouracil from 5-amino-6-(D-ribitylamino)uracil and L-tyrosine. The protein is 5-amino-6-(D-ribitylamino)uracil--L-tyrosine 4-hydroxyphenyl transferase of Microcystis aeruginosa (strain NIES-843 / IAM M-2473).